The chain runs to 104 residues: N(4)-acetylcytidine amidohydrolase (104 aa).

Positions 6–94 constitute an ASCH domain; sequence ITFFQRFQND…IAEIYPNQTQ (89 aa). The active-site Proton acceptor is Lys-21. Thr-24 functions as the Nucleophile in the catalytic mechanism. The active-site Proton donor is the Glu-74.

This sequence belongs to the N(4)-acetylcytidine amidohydrolase family.

It catalyses the reaction N(4)-acetylcytidine + H2O = cytidine + acetate + H(+). It carries out the reaction N(4)-acetyl-2'-deoxycytidine + H2O = 2'-deoxycytidine + acetate + H(+). The enzyme catalyses N(4)-acetylcytosine + H2O = cytosine + acetate + H(+). Catalyzes the hydrolysis of N(4)-acetylcytidine (ac4C). This is N(4)-acetylcytidine amidohydrolase (yqfB) from Salmonella agona (strain SL483).